We begin with the raw amino-acid sequence, 160 residues long: S-ribosylhomocysteine lyase (160 aa).

His57, His61, and Cys127 together coordinate Fe cation.

The protein belongs to the LuxS family. Homodimer. Fe cation serves as cofactor.

It carries out the reaction S-(5-deoxy-D-ribos-5-yl)-L-homocysteine = (S)-4,5-dihydroxypentane-2,3-dione + L-homocysteine. Its function is as follows. Involved in the synthesis of autoinducer 2 (AI-2) which is secreted by bacteria and is used to communicate both the cell density and the metabolic potential of the environment. The regulation of gene expression in response to changes in cell density is called quorum sensing. Catalyzes the transformation of S-ribosylhomocysteine (RHC) to homocysteine (HC) and 4,5-dihydroxy-2,3-pentadione (DPD). In Streptococcus pneumoniae (strain CGSP14), this protein is S-ribosylhomocysteine lyase.